The chain runs to 107 residues: Biphenyl 2,3-dioxygenase, ferredoxin component (107 aa).

Residues T4–V99 enclose the Rieske domain. Residues C43, H45, C62, and H65 each contribute to the [2Fe-2S] cluster site.

Belongs to the bacterial ring-hydroxylating dioxygenase ferredoxin component family. In terms of assembly, the multicomponent biphenyl dioxygenase system is composed of a ferredoxin reductase (BphA4), a ferredoxin (BphA3), and a terminal oxygenase (BphA1A2). Requires [2Fe-2S] cluster as cofactor.

It participates in xenobiotic degradation; biphenyl degradation. Its function is as follows. Ferredoxin component of the biphenyl dioxygenase system that catalyzes the stereospecific dihydroxylation of the aromatic ring of biphenyl, yielding a dihydrodiol compound. Is likely involved in biphenyl degradation that allows growth of Rhodococcus sp. strain RHA1 on biphenyl as the sole source of carbon and energy. The dioxygenase system can also use naphtalene and 4-chlorobiphenyl (4-CB) as substrates, as well as some polychlorinated biphenyls (PCB) such as 2,2'-dichlorobiphenyl, 2,3-dichlorobiphenyl and 2,5,2'-trichlorobiphenyl. It exhibits weak activity toward dibenzofuran and dibenzo-p-dioxin. Electrons are transferred from NADH to the [2Fe-2S] cluster in BphA1 via FAD of BphA4 and [2Fe-2S] cluster of BphA3. This chain is Biphenyl 2,3-dioxygenase, ferredoxin component, found in Rhodococcus jostii (strain RHA1).